Reading from the N-terminus, the 65-residue chain is Protein C' (65 aa).

Belongs to the rhabdoviruses C protein family.

Its function is as follows. Seems to stimulates transcription by the viral polymerase. May play a role in viral pathogenesis or transmission by insects vectors. This is Protein C' (P) from Vesicular stomatitis New Jersey virus (strain Missouri subtype Hazelhurst) (VSNJV).